The following is an 89-amino-acid chain: MTAVAQKCGPKSVSRPKHWSEEVEEAYRFQCAGYRDAIEYSDIKQKEPERWPHNGYVKKLQRKDGCFVYFDKTRECQDKDVNKTKMYGY.

Belongs to the MEIG1 family.

The protein is Meiosis expressed gene 1 protein homolog of Nematostella vectensis (Starlet sea anemone).